The following is a 59-amino-acid chain: ATP synthase subunit J, mitochondrial (59 aa).

A helical membrane pass occupies residues 9–25 (ILKVYWPFFVAGAAVYY).

It belongs to the ATPase j subunit family. As to quaternary structure, F-type ATPases have 2 components, CF(1) - the catalytic core - and CF(0) - the membrane proton channel. In yeast, the dimeric form of ATP synthase consists of 17 polypeptides: alpha, beta, gamma, delta, epsilon, 4 (B), 5 (OSCP), 6 (A), 8, 9 (C), d, E (Tim11), f, g, h, i/j and k.

The protein localises to the mitochondrion membrane. Functionally, mitochondrial membrane ATP synthase (F(1)F(0) ATP synthase or Complex V) produces ATP from ADP in the presence of a proton gradient across the membrane which is generated by electron transport complexes of the respiratory chain. F-type ATPases consist of two structural domains, F(1) - containing the extramembraneous catalytic core and F(0) - containing the membrane proton channel, linked together by a central stalk and a peripheral stalk. During catalysis, ATP synthesis in the catalytic domain of F(1) is coupled via a rotary mechanism of the central stalk subunits to proton translocation. Part of the complex F(0) domain. Minor subunit located with subunit a in the membrane. The sequence is that of ATP synthase subunit J, mitochondrial (ATP18) from Saccharomyces cerevisiae (strain ATCC 204508 / S288c) (Baker's yeast).